Consider the following 176-residue polypeptide: Ribosome maturation factor RimM (176 aa).

Residues 93 to 172 (KDEFFYFDII…KIQVKNSLDI (80 aa)) enclose the PRC barrel domain.

It belongs to the RimM family. In terms of assembly, binds ribosomal protein uS19.

The protein resides in the cytoplasm. An accessory protein needed during the final step in the assembly of 30S ribosomal subunit, possibly for assembly of the head region. Essential for efficient processing of 16S rRNA. May be needed both before and after RbfA during the maturation of 16S rRNA. It has affinity for free ribosomal 30S subunits but not for 70S ribosomes. The polypeptide is Ribosome maturation factor RimM (Campylobacter fetus subsp. fetus (strain 82-40)).